We begin with the raw amino-acid sequence, 308 residues long: MPTLSFWVCSATPVSPGFFALILLVFVTSIASNVVKIILIHIDSRLHTPMYFLLSQLSLRDILYISTIVPKMLVDQVMSQRAISFAGCTAQHFLYLTLAGAEFFLLGLMSCDRYVAICNPLHYPDLMSRKICWLIVAAAWLGGSIDGFLLTPVTMQFPFCASREINHFFCEVPALLKLSCTDTSAYETAMYVCCIMMLLIPFSVISGSYTRILITVYRMSEAEGRRKAVATCSSHMVVVSLFYGAAMYTYVLPHSYHTPEQDKAVSAFYTILTPMLNPLIYSLRNKDVTGALQKVVGRCVSSGKVTTF.

At 1–17 the chain is on the extracellular side; the sequence is MPTLSFWVCSATPVSPG. The helical transmembrane segment at 18–40 threads the bilayer; that stretch reads FFALILLVFVTSIASNVVKIILI. Over 41–51 the chain is Cytoplasmic; it reads HIDSRLHTPMY. Residues 52–74 form a helical membrane-spanning segment; sequence FLLSQLSLRDILYISTIVPKMLV. Residues 75–88 lie on the Extracellular side of the membrane; sequence DQVMSQRAISFAGC. Cysteines 88 and 170 form a disulfide. A helical transmembrane segment spans residues 89 to 109; that stretch reads TAQHFLYLTLAGAEFFLLGLM. Residues 110–130 lie on the Cytoplasmic side of the membrane; the sequence is SCDRYVAICNPLHYPDLMSRK. The helical transmembrane segment at 131-151 threads the bilayer; that stretch reads ICWLIVAAAWLGGSIDGFLLT. The Extracellular portion of the chain corresponds to 152–188; sequence PVTMQFPFCASREINHFFCEVPALLKLSCTDTSAYET. A helical transmembrane segment spans residues 189 to 209; sequence AMYVCCIMMLLIPFSVISGSY. At 210–235 the chain is on the cytoplasmic side; that stretch reads TRILITVYRMSEAEGRRKAVATCSSH. The helical transmembrane segment at 236–256 threads the bilayer; the sequence is MVVVSLFYGAAMYTYVLPHSY. The Extracellular segment spans residues 257–262; sequence HTPEQD. A helical membrane pass occupies residues 263–283; the sequence is KAVSAFYTILTPMLNPLIYSL. Over 284–308 the chain is Cytoplasmic; it reads RNKDVTGALQKVVGRCVSSGKVTTF.

The protein belongs to the G-protein coupled receptor 1 family.

Its subcellular location is the cell membrane. Its function is as follows. Odorant receptor. In Homo sapiens (Human), this protein is Olfactory receptor 2T7 (OR2T7).